We begin with the raw amino-acid sequence, 419 residues long: Queuine tRNA-ribosyltransferase accessory subunit 2 (419 aa).

Positions 326, 328, 331, and 357 each coordinate Zn(2+).

It belongs to the queuine tRNA-ribosyltransferase family. QTRT2 subfamily. In terms of assembly, heterodimer of a catalytic subunit and an accessory subunit. Zn(2+) is required as a cofactor.

Its subcellular location is the cytoplasm. Its function is as follows. Non-catalytic subunit of the queuine tRNA-ribosyltransferase (TGT) that catalyzes the base-exchange of a guanine (G) residue with queuine (Q) at position 34 (anticodon wobble position) in tRNAs with GU(N) anticodons (tRNA-Asp, -Asn, -His and -Tyr), resulting in the hypermodified nucleoside queuosine (7-(((4,5-cis-dihydroxy-2-cyclopenten-1-yl)amino)methyl)-7-deazaguanosine). The chain is Queuine tRNA-ribosyltransferase accessory subunit 2 from Drosophila grimshawi (Hawaiian fruit fly).